Reading from the N-terminus, the 453-residue chain is Phosphoglucosamine mutase (453 aa).

The Phosphoserine intermediate role is filled by serine 102. 4 residues coordinate Mg(2+): serine 102, aspartate 244, aspartate 246, and aspartate 248. A Phosphoserine modification is found at serine 102.

This sequence belongs to the phosphohexose mutase family. Mg(2+) is required as a cofactor. Activated by phosphorylation.

It carries out the reaction alpha-D-glucosamine 1-phosphate = D-glucosamine 6-phosphate. Catalyzes the conversion of glucosamine-6-phosphate to glucosamine-1-phosphate. This chain is Phosphoglucosamine mutase, found in Pelobacter propionicus (strain DSM 2379 / NBRC 103807 / OttBd1).